The primary structure comprises 829 residues: Ent-cassa-12,15-diene synthase (829 aa).

The tract at residues 1 to 50 is disordered; the sequence is MMLLGSPSSGGYGGKFAGASPAGGTTTMAPSAKQPSSRAPPPGITGGRND. Over residues 23–37 the composition is skewed to polar residues; that stretch reads GGTTTMAPSAKQPSS. Mg(2+) contacts are provided by Asp576, Asp580, Asn720, and Glu728. The DDXXD motif motif lies at 576–580; it reads DDLFD.

The protein belongs to the terpene synthase family. The cofactor is Mg(2+). In terms of tissue distribution, expressed in roots and stems.

It carries out the reaction ent-copalyl diphosphate = ent-cassa-12,15-diene + diphosphate. Its function is as follows. Involved in phytocassane phytoalexins biosynthesis. Catalyzes the conversion of ent-copalyl diphosphate to the phytoalexin precursor ent-cassa-12,15-diene. The sequence is that of Ent-cassa-12,15-diene synthase (KSL7) from Oryza sativa subsp. japonica (Rice).